We begin with the raw amino-acid sequence, 319 residues long: Carbonic anhydrase 6 (319 aa).

A signal peptide spans 1-14 (MITLLFLLVVGAQA). The region spanning 16–273 (HEWTYSEGVL…LNHRVVEANF (258 aa)) is the Alpha-carbonic anhydrase domain. Cys37 and Cys219 are oxidised to a cystine. An N-linked (GlcNAc...) asparagine glycan is attached at Asn62. His80 acts as the Proton donor/acceptor in catalysis. Zn(2+)-binding residues include His106, His108, and His133. Position 215 to 216 (215 to 216 (TT)) interacts with substrate. Asn251 carries an N-linked (GlcNAc...) asparagine glycan.

The protein belongs to the alpha-carbonic anhydrase family. Requires Zn(2+) as cofactor. Major constituent of saliva.

Its subcellular location is the secreted. The catalysed reaction is hydrogencarbonate + H(+) = CO2 + H2O. Reversible hydration of carbon dioxide. Its role in saliva is unknown. This is Carbonic anhydrase 6 (CA6) from Bos taurus (Bovine).